The primary structure comprises 63 residues: Large ribosomal subunit protein uL29 (63 aa).

This sequence belongs to the universal ribosomal protein uL29 family.

This chain is Large ribosomal subunit protein uL29, found in Hahella chejuensis (strain KCTC 2396).